The chain runs to 293 residues: Pyridoxal 5'-phosphate synthase subunit PdxS (293 aa).

Asp-23 contributes to the D-ribose 5-phosphate binding site. Lys-80 serves as the catalytic Schiff-base intermediate with D-ribose 5-phosphate. Residue Gly-152 participates in D-ribose 5-phosphate binding. Arg-164 provides a ligand contact to D-glyceraldehyde 3-phosphate. Residues Gly-213 and 234-235 (GS) contribute to the D-ribose 5-phosphate site.

This sequence belongs to the PdxS/SNZ family. In terms of assembly, in the presence of PdxT, forms a dodecamer of heterodimers.

It catalyses the reaction aldehydo-D-ribose 5-phosphate + D-glyceraldehyde 3-phosphate + L-glutamine = pyridoxal 5'-phosphate + L-glutamate + phosphate + 3 H2O + H(+). The protein operates within cofactor biosynthesis; pyridoxal 5'-phosphate biosynthesis. In terms of biological role, catalyzes the formation of pyridoxal 5'-phosphate from ribose 5-phosphate (RBP), glyceraldehyde 3-phosphate (G3P) and ammonia. The ammonia is provided by the PdxT subunit. Can also use ribulose 5-phosphate and dihydroxyacetone phosphate as substrates, resulting from enzyme-catalyzed isomerization of RBP and G3P, respectively. In Thermus thermophilus (strain ATCC 27634 / DSM 579 / HB8), this protein is Pyridoxal 5'-phosphate synthase subunit PdxS.